A 164-amino-acid chain; its full sequence is Xanthine-guanine phosphoribosyltransferase (164 aa).

5-phospho-alpha-D-ribose 1-diphosphate is bound by residues Arg41–Gly42 and Asp98–Thr106. Position 99 (Asp99) interacts with Mg(2+). Guanine contacts are provided by Asp102 and Ile145. Asp102 and Ile145 together coordinate xanthine. GMP contacts are provided by residues Asp102 to Thr106 and Trp144 to Ile145.

This sequence belongs to the purine/pyrimidine phosphoribosyltransferase family. XGPT subfamily. As to quaternary structure, homotetramer. Mg(2+) serves as cofactor.

It localises to the cell inner membrane. The enzyme catalyses GMP + diphosphate = guanine + 5-phospho-alpha-D-ribose 1-diphosphate. It catalyses the reaction XMP + diphosphate = xanthine + 5-phospho-alpha-D-ribose 1-diphosphate. The catalysed reaction is IMP + diphosphate = hypoxanthine + 5-phospho-alpha-D-ribose 1-diphosphate. Its pathway is purine metabolism; GMP biosynthesis via salvage pathway; GMP from guanine: step 1/1. It functions in the pathway purine metabolism; XMP biosynthesis via salvage pathway; XMP from xanthine: step 1/1. Its function is as follows. Purine salvage pathway enzyme that catalyzes the transfer of the ribosyl-5-phosphate group from 5-phospho-alpha-D-ribose 1-diphosphate (PRPP) to the N9 position of the 6-oxopurines guanine and xanthine to form the corresponding ribonucleotides GMP (guanosine 5'-monophosphate) and XMP (xanthosine 5'-monophosphate), with the release of PPi. To a lesser extent, also acts on hypoxanthine. The chain is Xanthine-guanine phosphoribosyltransferase from Rhizobium johnstonii (strain DSM 114642 / LMG 32736 / 3841) (Rhizobium leguminosarum bv. viciae).